Reading from the N-terminus, the 704-residue chain is Polyribonucleotide nucleotidyltransferase (704 aa).

2 residues coordinate Mg(2+): Asp-487 and Asp-493. The 60-residue stretch at 554–613 (PRLLTIKIHPDKIREVIGKGGSTIQAITKETGTQIDIQDDGTIIIASVNAIAAQAAKSRI) folds into the KH domain. The S1 motif domain occupies 623–691 (GRIYEGKVAK…KQGRIRLSIK (69 aa)).

It belongs to the polyribonucleotide nucleotidyltransferase family. In terms of assembly, component of the RNA degradosome, which is a multiprotein complex involved in RNA processing and mRNA degradation. Mg(2+) serves as cofactor.

The protein localises to the cytoplasm. The catalysed reaction is RNA(n+1) + phosphate = RNA(n) + a ribonucleoside 5'-diphosphate. Its function is as follows. Involved in mRNA degradation. Catalyzes the phosphorolysis of single-stranded polyribonucleotides processively in the 3'- to 5'-direction. The protein is Polyribonucleotide nucleotidyltransferase of Xanthomonas campestris pv. campestris (strain B100).